A 287-amino-acid chain; its full sequence is Bifunctional protein FolD (287 aa).

NADP(+)-binding positions include 165-167 (GRG), threonine 192, and valine 233.

This sequence belongs to the tetrahydrofolate dehydrogenase/cyclohydrolase family. Homodimer.

The enzyme catalyses (6R)-5,10-methylene-5,6,7,8-tetrahydrofolate + NADP(+) = (6R)-5,10-methenyltetrahydrofolate + NADPH. The catalysed reaction is (6R)-5,10-methenyltetrahydrofolate + H2O = (6R)-10-formyltetrahydrofolate + H(+). It participates in one-carbon metabolism; tetrahydrofolate interconversion. Catalyzes the oxidation of 5,10-methylenetetrahydrofolate to 5,10-methenyltetrahydrofolate and then the hydrolysis of 5,10-methenyltetrahydrofolate to 10-formyltetrahydrofolate. The protein is Bifunctional protein FolD of Cutibacterium acnes (strain DSM 16379 / KPA171202) (Propionibacterium acnes).